The following is an 84-amino-acid chain: Putative membrane protein insertion efficiency factor (84 aa).

It belongs to the UPF0161 family.

The protein localises to the cell inner membrane. Its function is as follows. Could be involved in insertion of integral membrane proteins into the membrane. This Nostoc sp. (strain PCC 7120 / SAG 25.82 / UTEX 2576) protein is Putative membrane protein insertion efficiency factor.